The sequence spans 139 residues: Large ribosomal subunit protein uL16 (139 aa).

This sequence belongs to the universal ribosomal protein uL16 family. In terms of assembly, part of the 50S ribosomal subunit.

Its function is as follows. Binds 23S rRNA and is also seen to make contacts with the A and possibly P site tRNAs. This Gloeothece citriformis (strain PCC 7424) (Cyanothece sp. (strain PCC 7424)) protein is Large ribosomal subunit protein uL16.